Here is a 189-residue protein sequence, read N- to C-terminus: MVKMIVGLGNPGSKYEKTKHNIGFMAIDNIVKNLDVTFTDDKNFKAQIGSTFINHEKVYFVKPTTFMNNSGIAVKALLTYYNIDITDLIVIYDDLDMEVSKLRLRSKGSAGGHNGIKSIIAHIGTQEFNRIKVGIGRPLKGMTVISHVMGQFNTEDNIAISLTLDRVVNAVKFYLQENDFEKTMQKFNG.

Tyrosine 15 contacts tRNA. The Proton acceptor role is filled by histidine 20. TRNA is bound by residues phenylalanine 66, asparagine 68, and asparagine 114.

This sequence belongs to the PTH family. In terms of assembly, monomer.

It localises to the cytoplasm. The enzyme catalyses an N-acyl-L-alpha-aminoacyl-tRNA + H2O = an N-acyl-L-amino acid + a tRNA + H(+). Its function is as follows. Hydrolyzes ribosome-free peptidyl-tRNAs (with 1 or more amino acids incorporated), which drop off the ribosome during protein synthesis, or as a result of ribosome stalling. In terms of biological role, catalyzes the release of premature peptidyl moieties from peptidyl-tRNA molecules trapped in stalled 50S ribosomal subunits, and thus maintains levels of free tRNAs and 50S ribosomes. This is Peptidyl-tRNA hydrolase from Streptococcus pyogenes serotype M6 (strain ATCC BAA-946 / MGAS10394).